Here is a 296-residue protein sequence, read N- to C-terminus: UDP-N-acetylglucosamine transporter TMEM241 homolog (296 aa).

The next 10 helical transmembrane spans lie at 7 to 29 (AVGL…VLSV), 41 to 61 (WQTL…WLEI), 67 to 87 (SDVV…YAGS), 93 to 113 (LPIP…YGFQ), 126 to 146 (IFSI…DPQF), 147 to 167 (DADG…YKVF), 187 to 207 (VFSV…ISAL), 217 to 237 (FHSG…ASVK), 248 to 266 (ASWN…LIYF), and 272 to 291 (VPLT…LVYA).

Belongs to the nucleotide-sugar transporter family. SLC35A subfamily.

It localises to the golgi apparatus. The protein resides in the cis-Golgi network membrane. In terms of biological role, golgi-localized UDP-N-acetylglucosamine (UDP-GlcNAc) transporter that transports UDP-N-acetylglucosamine into Golgi lumen. The polypeptide is UDP-N-acetylglucosamine transporter TMEM241 homolog (tmem241) (Xenopus laevis (African clawed frog)).